The sequence spans 318 residues: Probable 3-hydroxyisobutyrate dehydrogenase-like 3, mitochondrial (318 aa).

NAD(+)-binding positions include 35–64 (TRIGWIGIGIMGSAMVSHIIAAGYSVTVYA) and Ser-129. The active site involves Lys-203. Lys-271 is a binding site for NAD(+).

This sequence belongs to the HIBADH-related family. 3-hydroxyisobutyrate dehydrogenase subfamily.

It is found in the mitochondrion. It catalyses the reaction 3-hydroxy-2-methylpropanoate + NAD(+) = 2-methyl-3-oxopropanoate + NADH + H(+). Its pathway is amino-acid degradation; L-valine degradation. This chain is Probable 3-hydroxyisobutyrate dehydrogenase-like 3, mitochondrial, found in Arabidopsis thaliana (Mouse-ear cress).